Consider the following 215-residue polypeptide: Adenylate kinase (215 aa).

10–15 (GAGKGT) is an ATP binding site. The tract at residues 30 to 59 (STGDMFRAAIKEGTELGKQAKALMDQGKLV) is NMP. AMP-binding positions include T31, R36, 57 to 59 (KLV), 85 to 88 (GFPR), and Q92. An LID region spans residues 122-159 (GRRVHQPSGRTYHIIYNPPKVAGQDDITGEELITRADD). ATP is bound by residues R123 and 132-133 (TY). R156 and R167 together coordinate AMP. K200 provides a ligand contact to ATP.

This sequence belongs to the adenylate kinase family. As to quaternary structure, monomer.

The protein localises to the cytoplasm. The catalysed reaction is AMP + ATP = 2 ADP. Its pathway is purine metabolism; AMP biosynthesis via salvage pathway; AMP from ADP: step 1/1. Functionally, catalyzes the reversible transfer of the terminal phosphate group between ATP and AMP. Plays an important role in cellular energy homeostasis and in adenine nucleotide metabolism. The sequence is that of Adenylate kinase from Haemophilus ducreyi (strain 35000HP / ATCC 700724).